We begin with the raw amino-acid sequence, 69 residues long: MNKDQASGNWKQFKGKAKEQWGKLTDDDLTVIEGKRDQLVGRIQERYGYEKEAAEKEVKHWEDHHKYHW.

It belongs to the UPF0337 (CsbD) family.

This is UPF0337 protein ECA0631 from Pectobacterium atrosepticum (strain SCRI 1043 / ATCC BAA-672) (Erwinia carotovora subsp. atroseptica).